Here is a 294-residue protein sequence, read N- to C-terminus: GTP cyclohydrolase FolE2 (294 aa).

Belongs to the GTP cyclohydrolase IV family.

It carries out the reaction GTP + H2O = 7,8-dihydroneopterin 3'-triphosphate + formate + H(+). The protein operates within cofactor biosynthesis; 7,8-dihydroneopterin triphosphate biosynthesis; 7,8-dihydroneopterin triphosphate from GTP: step 1/1. Converts GTP to 7,8-dihydroneopterin triphosphate. The sequence is that of GTP cyclohydrolase FolE2 from Acinetobacter baylyi (strain ATCC 33305 / BD413 / ADP1).